A 211-amino-acid chain; its full sequence is Dihydrofolate reductase (211 aa).

In terms of domain architecture, DHFR spans 7–210; that stretch reads PIVGIVACLQ…YCFEFTLYNR (204 aa). Residues alanine 13 and 20–26 each bind NADP(+); that span reads GIGFRGG. Substrate is bound at residue 34–39; it reads EMKYFR. 58 to 60 is a binding site for NADP(+); the sequence is RKT. Arginine 74 is a binding site for substrate. Residues 80 to 82 and 123 to 130 each bind NADP(+); these read SRS and GGGEVYSQ.

Belongs to the dihydrofolate reductase family.

The catalysed reaction is (6S)-5,6,7,8-tetrahydrofolate + NADP(+) = 7,8-dihydrofolate + NADPH + H(+). Its pathway is cofactor biosynthesis; tetrahydrofolate biosynthesis; 5,6,7,8-tetrahydrofolate from 7,8-dihydrofolate: step 1/1. Key enzyme in folate metabolism. Catalyzes an essential reaction for de novo glycine and purine synthesis, and for DNA precursor synthesis. In Saccharomyces cerevisiae (strain ATCC 204508 / S288c) (Baker's yeast), this protein is Dihydrofolate reductase (DFR1).